The sequence spans 382 residues: Elongation factor Tu (382 aa).

Residues 1-7, 62-66, and 117-120 each bind GTP; these read HVDHGKT, DCPGH, and NKVD. Residues 1–190 enclose the tr-type G domain; the sequence is HVDHGKTTLT…AVDEYIPTPQ (190 aa). T7 is a binding site for Mg(2+).

It belongs to the TRAFAC class translation factor GTPase superfamily. Classic translation factor GTPase family. EF-Tu/EF-1A subfamily. As to quaternary structure, monomer.

It is found in the cytoplasm. The enzyme catalyses GTP + H2O = GDP + phosphate + H(+). GTP hydrolase that promotes the GTP-dependent binding of aminoacyl-tRNA to the A-site of ribosomes during protein biosynthesis. This chain is Elongation factor Tu, found in Chloroflexus aurantiacus.